The primary structure comprises 61 residues: UPF0434 protein PSPPH_1629 (61 aa).

The protein belongs to the UPF0434 family.

The polypeptide is UPF0434 protein PSPPH_1629 (Pseudomonas savastanoi pv. phaseolicola (strain 1448A / Race 6) (Pseudomonas syringae pv. phaseolicola (strain 1448A / Race 6))).